The chain runs to 259 residues: Haloacid dehalogenase-like hydrolase domain-containing protein 2 (259 aa).

The Mg(2+) site is built by Asp13 and Ser15. Residues 13–15 (DLS) and 46–47 (TN) contribute to the substrate site. Positions 47–71 (NTTKESKQDLLERLKKLEFDISEDE) form a coiled coil. Residue Lys50 is modified to N6-succinyllysine. Lys179 serves as a coordination point for substrate. Residue Asp204 coordinates Mg(2+).

This sequence belongs to the HAD-like hydrolase superfamily. Mg(2+) serves as cofactor.

In Bos taurus (Bovine), this protein is Haloacid dehalogenase-like hydrolase domain-containing protein 2 (HDHD2).